A 401-amino-acid polypeptide reads, in one-letter code: Phosphoglycerate kinase (401 aa).

Residues 26-28, Arg41, 64-67, Arg125, and Arg158 contribute to the substrate site; these read DFN and HLGK. Residues Lys209, Gly300, Glu331, and 357–360 contribute to the ATP site; that span reads GGDS.

The protein belongs to the phosphoglycerate kinase family. Monomer.

It is found in the cytoplasm. The catalysed reaction is (2R)-3-phosphoglycerate + ATP = (2R)-3-phospho-glyceroyl phosphate + ADP. The protein operates within carbohydrate degradation; glycolysis; pyruvate from D-glyceraldehyde 3-phosphate: step 2/5. The chain is Phosphoglycerate kinase from Clostridium tetani (strain Massachusetts / E88).